Reading from the N-terminus, the 458-residue chain is LysM domain-containing protein ARB_05157 (458 aa).

An N-terminal signal peptide occupies residues 1-19; that stretch reads MVSLKVCFLLLASSELAFG. One can recognise a LysM 1 domain in the interval 157 to 203; that stretch reads AFHLVKQGEDCGTISATYGITSAQFLAWNPSAGKDCTGLWANAYACV. Residues 210–232 are disordered; sequence PPKTTSQAPQPTPTKPSNGIETP. The span at 212–229 shows a compositional bias: polar residues; it reads KTTSQAPQPTPTKPSNGI. 3 LysM domains span residues 245 to 291, 325 to 371, and 409 to 455; these read KFHL…YACV, KFYL…YSCV, and KFHF…YLCV.

It is found in the secreted. In terms of biological role, might have a role in sequestration of chitin oligosaccharides (breakdown products of fungal cell walls that are released during invasion and act as triggers of host immunity) to dampen host defense. This chain is LysM domain-containing protein ARB_05157, found in Arthroderma benhamiae (strain ATCC MYA-4681 / CBS 112371) (Trichophyton mentagrophytes).